Here is a 438-residue protein sequence, read N- to C-terminus: L-fucose-proton symporter (438 aa).

The Cytoplasmic portion of the chain corresponds to 2–26 (GNTSIQTQSYRAVDKDAGQSRSYII). A helical transmembrane segment spans residues 27–53 (PFALLCSLFFLWAVANNLNDILLPQFQ). Residues 54–61 (QAFTLTNF) are Periplasmic-facing. A helical membrane pass occupies residues 62 to 87 (QAGLIQSAFYFGYFIIPIPAGILMKK). Over 88 to 90 (LSY) the chain is Cytoplasmic. The helical transmembrane segment at 91-113 (KAGIITGLFLYALGAALFWPAAE) threads the bilayer. Residues 114-117 (IMNY) are Periplasmic-facing. A helical membrane pass occupies residues 118 to 144 (TLFLVGLFIIAAGLGCLETAANPFVTV). Over 145–150 (LGPESS) the chain is Cytoplasmic. The helical transmembrane segment at 151–178 (GHFRLNLAQTFNSFGAIIAVVFGQSLIL) threads the bilayer. At 179-193 (SNVPHQSQDVLDKMS) the chain is on the periplasmic side. A helical transmembrane segment spans residues 194 to 227 (PEQLSAYKHSLVLSVQTPYMIIVAIVLLVALLIM). The Cytoplasmic segment spans residues 228-257 (LTKFPALQSDNHSDAKQGSFSASLSRLARI). A helical membrane pass occupies residues 258-287 (RHWRWAVLAQFCYVGAQTACWSYLIRYAVE). Residues 288–293 (EIPGMT) are Periplasmic-facing. Residues 294–319 (AGFAANYLTGTMVCFFIGRFTGTWLI) traverse the membrane as a helical segment. The Cytoplasmic portion of the chain corresponds to 320-324 (SRFAP). Residues 325 to 343 (HKVLAAYALIAMALCLISA) traverse the membrane as a helical segment. Residues 344-347 (FAGG) are Periplasmic-facing. A helical transmembrane segment spans residues 348 to 372 (HVGLIALTLCSAFMSIQYPTIFSLG). The Cytoplasmic segment spans residues 373 to 379 (IKNLGQD). The helical transmembrane segment at 380–407 (TKYGSSFIVMTIIGGGIVTPVMGFVSDA) threads the bilayer. The Periplasmic segment spans residues 408 to 410 (AGN). Residues 411–430 (IPTAELIPALCFAVIFIFAR) traverse the membrane as a helical segment. Residues 431–438 (FRSQTATN) are Cytoplasmic-facing.

Belongs to the major facilitator superfamily. FHS transporter (TC 2.A.1.7) family.

It is found in the cell inner membrane. The catalysed reaction is L-fucose(in) + H(+)(in) = L-fucose(out) + H(+)(out). It carries out the reaction D-arabinose(out) + H(+)(out) = D-arabinose(in) + H(+)(in). It catalyses the reaction L-galactose(out) + H(+)(out) = L-galactose(in) + H(+)(in). In terms of biological role, mediates the uptake of L-fucose across the boundary membrane with the concomitant transport of protons into the cell (symport system). Can also transport L-galactose and D-arabinose, but at reduced rates compared with L-fucose. Is not able to transport L-rhamnose and L-arabinose. Binds D-arabinose with the highest affinity, followed by L-fucose, and then by L-galactose. In Escherichia coli (strain K12), this protein is L-fucose-proton symporter (fucP).